The primary structure comprises 425 residues: Serine--tRNA ligase (425 aa).

230-232 lines the L-serine pocket; it reads TAE. 261-263 provides a ligand contact to ATP; the sequence is RSE. Residue E284 coordinates L-serine. 348–351 contacts ATP; it reads EISS. S384 contributes to the L-serine binding site.

It belongs to the class-II aminoacyl-tRNA synthetase family. Type-1 seryl-tRNA synthetase subfamily. Homodimer. The tRNA molecule binds across the dimer.

Its subcellular location is the cytoplasm. The enzyme catalyses tRNA(Ser) + L-serine + ATP = L-seryl-tRNA(Ser) + AMP + diphosphate + H(+). It carries out the reaction tRNA(Sec) + L-serine + ATP = L-seryl-tRNA(Sec) + AMP + diphosphate + H(+). The protein operates within aminoacyl-tRNA biosynthesis; selenocysteinyl-tRNA(Sec) biosynthesis; L-seryl-tRNA(Sec) from L-serine and tRNA(Sec): step 1/1. In terms of biological role, catalyzes the attachment of serine to tRNA(Ser). Is also able to aminoacylate tRNA(Sec) with serine, to form the misacylated tRNA L-seryl-tRNA(Sec), which will be further converted into selenocysteinyl-tRNA(Sec). This chain is Serine--tRNA ligase, found in Maridesulfovibrio salexigens (strain ATCC 14822 / DSM 2638 / NCIMB 8403 / VKM B-1763) (Desulfovibrio salexigens).